Consider the following 251-residue polypeptide: uncharacterized protein (251 aa).

To Anabaena PCC 7120 alr2406.

This is an uncharacterized protein from Synechocystis sp. (strain ATCC 27184 / PCC 6803 / Kazusa).